A 169-amino-acid chain; its full sequence is DNA damage-inducible transcript 3 protein (169 aa).

The segment at 10 to 18 is interaction with TRIB3; that stretch reads FGTLSSWEL. The N-terminal stretch occupies residues 10–26; that stretch reads FGTLSSWELEAWYEDLQ. Residues S14, S15, S30, and S31 each carry the phosphoserine; by CK2 modification. The segment at 32-139 is disordered; it reads DENGGTYVSP…KVAQLAEENE (108 aa). Residues 74 to 89 show a composition bias toward low complexity; sequence TSTSQSPHSPDSSQSS. Phosphoserine; by MAPK14 occurs at positions 79 and 82. In terms of domain architecture, bZIP spans 99-162; sequence QGRTRKRKQS…EATRRALIDR (64 aa). The segment at 101–130 is basic motif; the sequence is RTRKRKQSGHSPARAGKQRMKEKEQENERK. Residues 119–139 are compositionally biased toward basic and acidic residues; the sequence is RMKEKEQENERKVAQLAEENE. The interval 134 to 148 is leucine-zipper; that stretch reads LAEENERLKQEIERL.

Belongs to the bZIP family. As to quaternary structure, heterodimer. Interacts with TCF7L2/TCF4, EP300/P300, HDAC1, HDAC5 and HDAC6. Interacts with TRIB3 which blocks its association with EP300/P300. Interacts with FOXO3, CEBPB and ATF4. In terms of assembly, interacts with isoform AltDDIT3 of DDIT3. In terms of processing, ubiquitinated, leading to its degradation by the proteasome. Post-translationally, phosphorylation at serine residues by MAPK14 enhances its transcriptional activation activity while phosphorylation at serine residues by CK2 inhibits its transcriptional activation activity.

It is found in the cytoplasm. The protein localises to the nucleus. In terms of biological role, multifunctional transcription factor in endoplasmic reticulum (ER) stress response. Plays an essential role in the response to a wide variety of cell stresses and induces cell cycle arrest and apoptosis in response to ER stress. Plays a dual role both as an inhibitor of CCAAT/enhancer-binding protein (C/EBP) function and as an activator of other genes. Acts as a dominant-negative regulator of C/EBP-induced transcription: dimerizes with members of the C/EBP family, impairs their association with C/EBP binding sites in the promoter regions, and inhibits the expression of C/EBP regulated genes. Positively regulates the transcription of TRIB3, IL6, IL8, IL23, TNFRSF10B/DR5, PPP1R15A/GADD34, BBC3/PUMA, BCL2L11/BIM and ERO1L. Negatively regulates; expression of BCL2 and MYOD1, ATF4-dependent transcriptional activation of asparagine synthetase (ASNS), CEBPA-dependent transcriptional activation of hepcidin (HAMP) and CEBPB-mediated expression of peroxisome proliferator-activated receptor gamma (PPARG). Together with ATF4, mediates ER-mediated cell death by promoting expression of genes involved in cellular amino acid metabolic processes, mRNA translation and the unfolded protein response (UPR) in response to ER stress. Inhibits the canonical Wnt signaling pathway by binding to TCF7L2/TCF4, impairing its DNA-binding properties and repressing its transcriptional activity. Plays a regulatory role in the inflammatory response through the induction of caspase-11 (CASP4/CASP11) which induces the activation of caspase-1 (CASP1) and both these caspases increase the activation of pro-IL1B to mature IL1B which is involved in the inflammatory response. Acts as a major regulator of postnatal neovascularization through regulation of endothelial nitric oxide synthase (NOS3)-related signaling. The sequence is that of DNA damage-inducible transcript 3 protein (DDIT3) from Homo sapiens (Human).